The following is an 861-amino-acid chain: MKLLKLPWLQHREEHKSYEVYTCDVSPDSQRLATGGLDGKIRIWSIPDILKFASNPNASTDKDILMKPLSTMSRHAGSVTTVKFSPDGKYLASGSDDRILLIWELEGGTTQPMFGAESTDIEHWNVRRRLVAHDNDIQDICWAPDSSIMVSVGLDRAIIIWNGSTFEKVKRFDVHQSHVKGVVFDPANKYFATASDDRTIKMFRYHKTGETSFSVEHVITEPFKGSPLTTYFRRLSWSPDGQHIAAPNAMNGPVSTVAIIERGTWESPVSLVGHDQPTEVASFNPRIFKRQKDDSTTDTIDGKKTGISDEVDCIVASSGQDKTLAVWSTSKARPLIVAQDICGKSITDMSWTPDGKILFITSLDSSIVVLTFEDNEFGEAIPLEQNIEYLHRYGVDKDSLVFPETVEQLILEDQAKNLKKSNVDMNLLENRLGKPGTIAEPNILQVRSKKRAQLTGTGNHTDNNTTSKAEPPHVNILQVKRKNKVTGVTEVLHDTVVKNGKKRVAPTLITMGHSPDKSRKRVILSTAQSLNNTVQPTTKPAPEEKSTLAKLQSTKLSKPSFSIPRLGIHTLIMGFKERTRENFINQGSTDSTVDESNVNIDEGPQQLEQNSAEEHLLTLNSKTTLEKIWRDEPNTRYLEFNSILPDADAVLREMGTIDDLYVLEVRNGVERSIQFDTEALYDNSTRVLGYHAGQRSFELFFPDVVLTCVGCMETKTWILATTTGQLFFIDTLGQARCPRISIGHKIIKLCTSQSHVIAITETALIYVWDLVSMSLTLKNIPLLPLLARDPITGNRARFTSKIKSAKMTENKDLQLVMTDIAPDSDSNPSTLHFLYSSSLSCWCSPKEALLVDASVEQVITS.

WD repeat units lie at residues 14–54 (EHKS…KFAS), 74–113 (RHAGSVTTVKFSPDGKYLASGSDDRILLIWELEGGTTQPM), 132–171 (AHDNDIQDICWAPDSSIMVSVGLDRAIIIWNGSTFEKVKR), 174–213 (VHQSHVKGVVFDPANKYFATASDDRTIKMFRYHKTGETSF), 227–270 (PLTT…SPVS), 295–337 (STTD…PLIV), and 341–382 (ICGK…EAIP). Positions 450–471 (KRAQLTGTGNHTDNNTTSKAEP) are disordered. Residues 455–466 (TGTGNHTDNNTT) show a composition bias toward low complexity.

The protein belongs to the WD repeat HIR1 family.

It localises to the nucleus. Its function is as follows. Required for replication-independent chromatin assembly and for the periodic repression of histone gene transcription during the cell cycle. This Kluyveromyces lactis (strain ATCC 8585 / CBS 2359 / DSM 70799 / NBRC 1267 / NRRL Y-1140 / WM37) (Yeast) protein is Protein HIR1 (HIR1).